The primary structure comprises 102 residues: Small ribosomal subunit protein uS10 (102 aa).

It belongs to the universal ribosomal protein uS10 family. In terms of assembly, part of the 30S ribosomal subunit.

Involved in the binding of tRNA to the ribosomes. This chain is Small ribosomal subunit protein uS10, found in Akkermansia muciniphila (strain ATCC BAA-835 / DSM 22959 / JCM 33894 / BCRC 81048 / CCUG 64013 / CIP 107961 / Muc).